We begin with the raw amino-acid sequence, 807 residues long: Protein FAR1-RELATED SEQUENCE 2 (807 aa).

Residues Tyr52 to Pro138 enclose the FAR1 domain. Positions Val219–Ser315 constitute an MULE domain. The SWIM-type zinc finger occupies Phe499 to Asp535. The stretch at Glu660–Ala680 forms a coiled coil. Over residues Gly788–Ser798 the composition is skewed to polar residues. Positions Gly788–Asn807 are disordered.

This sequence belongs to the FHY3/FAR1 family. Expressed in hypocotyls, rosette and cauline leaves, inflorescences stems, flowers and siliques.

The protein resides in the nucleus. Functionally, putative transcription activator involved in regulating light control of development. This Arabidopsis thaliana (Mouse-ear cress) protein is Protein FAR1-RELATED SEQUENCE 2 (FRS2).